The primary structure comprises 343 residues: MTITPQEALQRTIEHREIFHDEMLHLMRLIMRGDMSPVMAAAIITGLRVKKETIGEIAAAATVMREFANHVEVQDNSNFVDIVGTGGDGSHTFNISTASMFVTAAAGAKVAKHGNRGVSSKSGSADVLEALGVNIDLQPDQVAASIAETGMGFMFAPNHHPAMKNIAAVRRELGVRTIFNILGPLTNPAGAPNQLMGVFHPDLVGIQVRVMQRLGAQHVLVVYGKDGMDEVSLGAATLVGELRDGQVHEYEIHPEDFGLQMVSNRTLKVENAEESRAMLLGALDNQPGVAREIVTLNAGTALYAANVAGSIADGIQLAREAIASGKARAKVDELVRFTQQFKR.

5-phospho-alpha-D-ribose 1-diphosphate contacts are provided by residues G84, 87-88 (GD), T92, 94-97 (NIST), 112-120 (KHGNRGVSS), and S124. An anthranilate-binding site is contributed by G84. S96 lines the Mg(2+) pocket. N115 is an anthranilate binding site. R170 is a binding site for anthranilate. Positions 229 and 230 each coordinate Mg(2+).

The protein belongs to the anthranilate phosphoribosyltransferase family. As to quaternary structure, homodimer. The cofactor is Mg(2+).

It carries out the reaction N-(5-phospho-beta-D-ribosyl)anthranilate + diphosphate = 5-phospho-alpha-D-ribose 1-diphosphate + anthranilate. Its pathway is amino-acid biosynthesis; L-tryptophan biosynthesis; L-tryptophan from chorismate: step 2/5. Its function is as follows. Catalyzes the transfer of the phosphoribosyl group of 5-phosphorylribose-1-pyrophosphate (PRPP) to anthranilate to yield N-(5'-phosphoribosyl)-anthranilate (PRA). This Burkholderia multivorans (strain ATCC 17616 / 249) protein is Anthranilate phosphoribosyltransferase.